Reading from the N-terminus, the 157-residue chain is 2-C-methyl-D-erythritol 2,4-cyclodiphosphate synthase (157 aa).

A divalent metal cation contacts are provided by Asp8 and His10. Residues Asp8–His10 and His34–Ser35 each bind 4-CDP-2-C-methyl-D-erythritol 2-phosphate. An a divalent metal cation-binding site is contributed by His42. 4-CDP-2-C-methyl-D-erythritol 2-phosphate is bound by residues Asp56–Gly58, Phe61–Asp65, Thr132–Glu135, Phe139, and Arg142.

Belongs to the IspF family. Homotrimer. A divalent metal cation serves as cofactor.

It carries out the reaction 4-CDP-2-C-methyl-D-erythritol 2-phosphate = 2-C-methyl-D-erythritol 2,4-cyclic diphosphate + CMP. It participates in isoprenoid biosynthesis; isopentenyl diphosphate biosynthesis via DXP pathway; isopentenyl diphosphate from 1-deoxy-D-xylulose 5-phosphate: step 4/6. Its function is as follows. Involved in the biosynthesis of isopentenyl diphosphate (IPP) and dimethylallyl diphosphate (DMAPP), two major building blocks of isoprenoid compounds. Catalyzes the conversion of 4-diphosphocytidyl-2-C-methyl-D-erythritol 2-phosphate (CDP-ME2P) to 2-C-methyl-D-erythritol 2,4-cyclodiphosphate (ME-CPP) with a corresponding release of cytidine 5-monophosphate (CMP). This is 2-C-methyl-D-erythritol 2,4-cyclodiphosphate synthase from Salinibacter ruber (strain DSM 13855 / M31).